The following is a 138-amino-acid chain: DNA-directed RNA polymerase subunit omega (138 aa).

The protein belongs to the RNA polymerase subunit omega family. The RNAP catalytic core consists of 2 alpha, 1 beta, 1 beta' and 1 omega subunit. When a sigma factor is associated with the core the holoenzyme is formed, which can initiate transcription.

The catalysed reaction is RNA(n) + a ribonucleoside 5'-triphosphate = RNA(n+1) + diphosphate. Its function is as follows. Promotes RNA polymerase assembly. Latches the N- and C-terminal regions of the beta' subunit thereby facilitating its interaction with the beta and alpha subunits. This chain is DNA-directed RNA polymerase subunit omega, found in Thermodesulfovibrio yellowstonii (strain ATCC 51303 / DSM 11347 / YP87).